A 371-amino-acid chain; its full sequence is Chemerin-like receptor 1 (371 aa).

Residues 1–39 (MEYDAYNDSGIYDDEYSDGFGYFVDLEEASPWEAKVAPV) are Extracellular-facing. The N-linked (GlcNAc...) asparagine glycan is linked to asparagine 7. The chain crosses the membrane as a helical span at residues 40–62 (FLVVIYSLVCFLGLLGNGLVIVI). Topologically, residues 63–73 (ATFKMKKTVNT) are cytoplasmic. The helical transmembrane segment at 74–95 (VWFVNLAVADFLFNIFLPMHIT) threads the bilayer. The Extracellular portion of the chain corresponds to 96–112 (YAAMDYHWVFGKAMCKI). A disulfide bond links cysteine 110 and cysteine 187. A helical membrane pass occupies residues 113–133 (SNFLLSHNMYTSVFLLTVISF). Residues 134–152 (DRCISVLLPVWSQNHRSIR) lie on the Cytoplasmic side of the membrane. The chain crosses the membrane as a helical span at residues 153–174 (LAYMTCSAVWVLAFFLSSPSLV). The Extracellular segment spans residues 175-222 (FRDTANIHGKITCFNNFSLAAPESSPHPAHSQVVSTGYSRHVAVTVTR). Asparagine 190 carries an N-linked (GlcNAc...) asparagine glycan. The helical transmembrane segment at 223-243 (FLCGFLIPVFIITACYLTIVF) threads the bilayer. The Cytoplasmic portion of the chain corresponds to 244–259 (KLQRNRLAKNKKPFKI). The chain crosses the membrane as a helical span at residues 260 to 280 (IITIIITFFLCWCPYHTLYLL). The Extracellular segment spans residues 281–298 (ELHHTAVPSSVFSLGLPL). Residues 299-318 (ATAVAIANSCMNPILYVFMG) traverse the membrane as a helical segment. The Cytoplasmic portion of the chain corresponds to 319 to 371 (HDFRKFKVALFSRLANALSEDTGPSSYPSHRSFTKMSSLNEKASVNEKETSTL). Serine 337 carries the phosphoserine modification. Position 340 is a phosphothreonine (threonine 340). Serine 347, serine 350, and serine 356 each carry phosphoserine. A Phosphothreonine modification is found at threonine 370.

It belongs to the chemokine-like receptor (CMKLR) family. Expressed in the differentiated adipocytes (at protein level). Ubiquitous. Highly expressed in adipose tissue and immature plasmacytoid dendritic cells (DCs) and at lower levels in myeloid DCs, macrophages, and NK cells. Expressed on macrophages isolated from different tissues, including peritoneal cavities, pleural cavities and spleen.

The protein resides in the cell membrane. In terms of biological role, receptor for the chemoattractant adipokine chemerin/RARRES2 and for the omega-3 fatty acid derived molecule resolvin E1. Interaction with RARRES2 initiates activation of G proteins G(i)/G(o) and beta-arrestin pathways inducing cellular responses via second messenger pathways such as intracellular calcium mobilization, phosphorylation of MAP kinases MAPK1/MAPK3 (ERK1/2), TYRO3, MAPK14/P38MAPK and PI3K leading to multifunctional effects, like, reduction of immune responses, enhancing of adipogenesis and angionesis. Resolvin E1 down-regulates cytokine production in macrophages by reducing the activation of MAPK1/3 (ERK1/2) and NF-kappa-B. Positively regulates adipogenesis and adipocyte metabolism. The protein is Chemerin-like receptor 1 (Cmklr1) of Mus musculus (Mouse).